The chain runs to 354 residues: tRNA N6-adenosine threonylcarbamoyltransferase (354 aa).

Fe cation is bound by residues His116 and His120. Substrate is bound by residues 139-143 (LVSGG), Asp172, Gly185, and Asn281. Asp309 is a binding site for Fe cation.

This sequence belongs to the KAE1 / TsaD family. Fe(2+) serves as cofactor.

It is found in the cytoplasm. It carries out the reaction L-threonylcarbamoyladenylate + adenosine(37) in tRNA = N(6)-L-threonylcarbamoyladenosine(37) in tRNA + AMP + H(+). In terms of biological role, required for the formation of a threonylcarbamoyl group on adenosine at position 37 (t(6)A37) in tRNAs that read codons beginning with adenine. Is involved in the transfer of the threonylcarbamoyl moiety of threonylcarbamoyl-AMP (TC-AMP) to the N6 group of A37, together with TsaE and TsaB. TsaD likely plays a direct catalytic role in this reaction. The chain is tRNA N6-adenosine threonylcarbamoyltransferase from Parasynechococcus marenigrum (strain WH8102).